We begin with the raw amino-acid sequence, 181 residues long: Translationally-controlled tumor protein homolog (181 aa).

A TCTP domain is found at 1–181 (MLIYKDIFTD…VKEAILEEKC (181 aa)).

It belongs to the TCTP family.

It is found in the cytoplasm. Involved in calcium binding and microtubule stabilization. The sequence is that of Translationally-controlled tumor protein homolog (tct-1) from Caenorhabditis briggsae.